The sequence spans 302 residues: ATP synthase mitochondrial F1 complex assembly factor 1 (302 aa).

It belongs to the ATP11 family. In terms of assembly, interacts with ATP5F1B; involved in the assembly of the F1 component of the mitochondrial ATP synthase (ATPase).

Its subcellular location is the mitochondrion inner membrane. Has a complex stabilizing activity in the assembly of the mitochondrial F1-F0 complex. This is ATP synthase mitochondrial F1 complex assembly factor 1 (atpaf1) from Danio rerio (Zebrafish).